The sequence spans 125 residues: Fluoride-specific ion channel FluC (125 aa).

4 helical membrane-spanning segments follow: residues 4–24, 35–55, 69–89, and 103–123; these read WLFV…ISEL, YGTL…FALI, LMVG…DTVV, and MGLN…LVAS. Na(+) contacts are provided by Gly-75 and Thr-78.

Belongs to the fluoride channel Fluc/FEX (TC 1.A.43) family.

It is found in the cell inner membrane. It catalyses the reaction fluoride(in) = fluoride(out). Its activity is regulated as follows. Na(+) is not transported, but it plays an essential structural role and its presence is essential for fluoride channel function. Fluoride-specific ion channel. Important for reducing fluoride concentration in the cell, thus reducing its toxicity. This Aeromonas salmonicida (strain A449) protein is Fluoride-specific ion channel FluC.